We begin with the raw amino-acid sequence, 187 residues long: uncharacterized protein (187 aa).

Transmembrane regions (helical) follow at residues 29 to 50 (IFIDIFIGVWAFILAVVWVYWI), 70 to 92 (FVIGYFLTFVIVAWLTSAAINAY), 128 to 147 (IFFALTFFSIGVISDFSVLR), and 154 to 176 (LALVYFVCLFGFIIWIGLAISYL).

It is found in the cell membrane. This is an uncharacterized protein from Archaeoglobus fulgidus (strain ATCC 49558 / DSM 4304 / JCM 9628 / NBRC 100126 / VC-16).